The following is a 254-amino-acid chain: Phosphoribosylaminoimidazole-succinocarboxamide synthase (254 aa).

It belongs to the SAICAR synthetase family.

It carries out the reaction 5-amino-1-(5-phospho-D-ribosyl)imidazole-4-carboxylate + L-aspartate + ATP = (2S)-2-[5-amino-1-(5-phospho-beta-D-ribosyl)imidazole-4-carboxamido]succinate + ADP + phosphate + 2 H(+). Its pathway is purine metabolism; IMP biosynthesis via de novo pathway; 5-amino-1-(5-phospho-D-ribosyl)imidazole-4-carboxamide from 5-amino-1-(5-phospho-D-ribosyl)imidazole-4-carboxylate: step 1/2. This is Phosphoribosylaminoimidazole-succinocarboxamide synthase from Gluconacetobacter diazotrophicus (strain ATCC 49037 / DSM 5601 / CCUG 37298 / CIP 103539 / LMG 7603 / PAl5).